We begin with the raw amino-acid sequence, 245 residues long: MSGKVWLVGAGPGDPELLTLKAVRALQDADVVMVDDLVNPSILEHCPSARLVRVGKRGGCRSTPQDFIQRLMLRHARQGRSVVRLKGGDPCIFGRAGEEAEWLARHGIDSEIVNGITAGLAGATACGIPLTYRGISRGVTLVTAHTQDDSPLAWEALARSGTTLVVYMGVARLAEIQAGLLAGGMAEDTPLAMIENATLGNQRECRSNLGELLRDAGRFALKSPAILVIGEVTRDIVSQPISLSA.

S-adenosyl-L-homocysteine is bound by residues proline 12, 87–89 (GGD), 117–118 (TA), methionine 168, alanine 197, and alanine 225.

Belongs to the precorrin methyltransferase family.

The enzyme catalyses uroporphyrinogen III + 2 S-adenosyl-L-methionine = precorrin-2 + 2 S-adenosyl-L-homocysteine + H(+). Its pathway is cofactor biosynthesis; adenosylcobalamin biosynthesis; precorrin-2 from uroporphyrinogen III: step 1/1. It functions in the pathway porphyrin-containing compound metabolism; siroheme biosynthesis; precorrin-2 from uroporphyrinogen III: step 1/1. Catalyzes the two successive C-2 and C-7 methylation reactions involved in the conversion of uroporphyrinogen III to precorrin-2 via the intermediate formation of precorrin-1. It is a step in the biosynthesis of both cobalamin (vitamin B12) and siroheme. The polypeptide is Uroporphyrinogen-III C-methyltransferase (cobA) (Pseudomonas aeruginosa (strain ATCC 15692 / DSM 22644 / CIP 104116 / JCM 14847 / LMG 12228 / 1C / PRS 101 / PAO1)).